A 397-amino-acid polypeptide reads, in one-letter code: MDSLANSINQFALEFSKKLAETDEGKNIFFSPWGISTTLAMVYLGTKGTTATQMAQVLQFDTDQDVKSSPENEKKRKVDLNSDQVGEIHFGFQKLISEINNPSNTYVLKTANGIYGEKTYPFHNKYIEDIKTYFGAKPQSVNFVEDSDQIRKDINSWVESQTEGKIPNLLPDDAVDSATKMVLVNALYFKGLWEHQFSVQDTTEKPFRINKTSSKPVQMMSMKKNLEVFHIEKPQATGLRLDYKNRDLSLLLILPEDVCGLDQLEKAITYDQLSEWTSEDMMEMYTVELHLPKFKLEQSYDLKTTLASMGMSDAFNQSKADFSGMSDERNLYLSNVFHKSFVEINEQGTEAAAGSASEISVRIKLPTIEINADHPFIFFIRHNKTNSILFYGRFCSP.

The Nuclear localization signal motif lies at 74–77; the sequence is KKRK.

This sequence belongs to the serpin family. Ov-serpin subfamily.

It localises to the nucleus. The protein localises to the cytoplasm. Its function is as follows. Protease inhibitor that may play a role in the regulation of protease activities during hematopoiesis and apoptosis induced by TNF. May regulate protease activities in the cytoplasm and in the nucleus. The sequence is that of Serpin B10 (SERPINB10) from Sorex araneus (Eurasian common shrew).